We begin with the raw amino-acid sequence, 432 residues long: NADH-quinone oxidoreductase subunit D (432 aa).

Belongs to the complex I 49 kDa subunit family. In terms of assembly, NDH-1 is composed of 14 different subunits. Subunits NuoB, C, D, E, F, and G constitute the peripheral sector of the complex.

Its subcellular location is the cell membrane. It carries out the reaction a quinone + NADH + 5 H(+)(in) = a quinol + NAD(+) + 4 H(+)(out). In terms of biological role, NDH-1 shuttles electrons from NADH, via FMN and iron-sulfur (Fe-S) centers, to quinones in the respiratory chain. The immediate electron acceptor for the enzyme in this species is believed to be a menaquinone. Couples the redox reaction to proton translocation (for every two electrons transferred, four hydrogen ions are translocated across the cytoplasmic membrane), and thus conserves the redox energy in a proton gradient. In Mycobacteroides abscessus (strain ATCC 19977 / DSM 44196 / CCUG 20993 / CIP 104536 / JCM 13569 / NCTC 13031 / TMC 1543 / L948) (Mycobacterium abscessus), this protein is NADH-quinone oxidoreductase subunit D.